Here is a 598-residue protein sequence, read N- to C-terminus: Transcription factor dpl-1 (598 aa).

Disordered stretches follow at residues 1 to 73 (MNPT…PTGL), 435 to 457 (NRPY…VNSG), and 573 to 598 (TEQP…DYFQ). Polar residues predominate over residues 13 to 22 (PAQSRPQVSL). Gly residues predominate over residues 55–64 (GVGGSSGAGG).

This sequence belongs to the E2F/DP family. As to quaternary structure, component of the DRM complex, at least composed of lin-9, lin-35, lin-37, lin-52, lin-53, lin-54- dpl-1 and efl-1. Interacts (via N-terminus) with efl-1. Interacts (via C-terminus) with lin-35 (via C-terminus).

Its subcellular location is the nucleus. Synthetic multivulva class B (synMuvB) protein. SynMuvB proteins are required to repress the induction of vulval development by Ras signaling and probably act by forming the multiprotein DRM complex that represses transcription. May also negatively regulate vulval development in association with other SynMuv class B proteins such as lin-15A. Can stimulate E2F-dependent transcription. Plays a role in negatively regulating the progression through the G1 phase of the cell cycle during postembryonic development, most likely by acting as a transcriptional repressor in association with the cell cycle regulatory factor efl-1 and the transcriptional repressor lin-35, but may also act as a positive regulator of cell cycle entry. Involved in the regulation of intestinal cell division during postembryonic development, most likely in complex with efl-1 and lin-35. Promotes germ cell programmed cell death, probably together with efl-1, by positively regulating the expression of the apoptosis proteins ced-3 and ced-4. In particular, positively regulates the expression of ced-4 in response to starvation. Its role in programmed cell death may be in conjunction with cell cycle regulatory factor efl-1 and the synthetic multivulva class B proteins lin-35, lin-37 and lin-52, and is independent of the ced-1, ced-8 and ced-9 pathways. The sequence is that of Transcription factor dpl-1 from Caenorhabditis elegans.